The primary structure comprises 70 residues: Large ribosomal subunit protein bL31 (70 aa).

Belongs to the bacterial ribosomal protein bL31 family. Type A subfamily. In terms of assembly, part of the 50S ribosomal subunit.

Its function is as follows. Binds the 23S rRNA. This Chlorobium chlorochromatii (strain CaD3) protein is Large ribosomal subunit protein bL31.